A 104-amino-acid polypeptide reads, in one-letter code: UPF0213 protein plu4503 (104 aa).

The 76-residue stretch at 4 to 79 (NQWVLYLLKT…KQLSKQQKER (76 aa)) folds into the GIY-YIG domain.

Belongs to the UPF0213 family.

This Photorhabdus laumondii subsp. laumondii (strain DSM 15139 / CIP 105565 / TT01) (Photorhabdus luminescens subsp. laumondii) protein is UPF0213 protein plu4503.